Consider the following 68-residue polypeptide: Conotoxin Lt5.2 (68 aa).

An N-terminal signal peptide occupies residues 1–19 (MLCLPVFIILLLLASPAAP). A propeptide spanning residues 20 to 54 (KSLETRIQNDLIRAGLTDADLKTEKGFLSGLLNVA) is cleaved from the precursor.

It belongs to the conotoxin T superfamily. Contains 2 disulfide bonds that can be either 'C1-C3, C2-C4' or 'C1-C4, C2-C3', since these disulfide connectivities have been observed for conotoxins with cysteine framework V (for examples, see AC P0DQQ7 and AC P81755). In terms of tissue distribution, expressed by the venom duct.

It localises to the secreted. The protein is Conotoxin Lt5.2 of Conus litteratus (Lettered cone).